The chain runs to 213 residues: Ribonuclease T (213 aa).

The Exonuclease domain occupies 28–202; that stretch reads VVVDVETGGF…YDTEQTARLF (175 aa). Residues Asp31, Glu33, His189, and Asp194 each coordinate Mg(2+). Residue His189 is the Proton donor/acceptor of the active site.

Belongs to the RNase T family. In terms of assembly, homodimer. Requires Mg(2+) as cofactor.

Functionally, trims short 3' overhangs of a variety of RNA species, leaving a one or two nucleotide 3' overhang. Responsible for the end-turnover of tRNA: specifically removes the terminal AMP residue from uncharged tRNA (tRNA-C-C-A). Also appears to be involved in tRNA biosynthesis. This is Ribonuclease T from Xanthomonas euvesicatoria pv. vesicatoria (strain 85-10) (Xanthomonas campestris pv. vesicatoria).